The primary structure comprises 328 residues: Twinfilin (328 aa).

Positions 1–137 (MSASVELKPT…DYQQIMKSLS (137 aa)) constitute an ADF-H 1 domain. Serine 143 bears the Phosphoserine mark. The region spanning 173–304 (GVAMSIDDKA…TEKEILHAAG (132 aa)) is the ADF-H 2 domain. The disordered stretch occupies residues 302–328 (AAGISSPQAETSTTKTGFSRPRPPRRR). A compositionally biased stretch (polar residues) spans 306 to 318 (SSPQAETSTTKTG).

Belongs to the actin-binding proteins ADF family. Twinfilin subfamily. Interacts with G-actin; ADP-actin form.

The protein resides in the cytoplasm. The protein localises to the cytoskeleton. In terms of biological role, actin-binding protein involved in motile and morphological processes. Inhibits actin polymerization, likely by sequestering G-actin. Prevents actin filament assembly by forming a 1:1 complex with actin monomers, and inhibits the nucleotide exchange reaction of actin monomers. The polypeptide is Twinfilin (twf1) (Schizosaccharomyces pombe (strain 972 / ATCC 24843) (Fission yeast)).